Reading from the N-terminus, the 163-residue chain is NADH-quinone oxidoreductase subunit I (163 aa).

2 consecutive 4Fe-4S ferredoxin-type domains span residues 53–83 (LRRY…IEAG) and 94–123 (TLYE…ETRE). Residues cysteine 63, cysteine 66, cysteine 69, cysteine 73, cysteine 103, cysteine 106, cysteine 109, and cysteine 113 each contribute to the [4Fe-4S] cluster site.

The protein belongs to the complex I 23 kDa subunit family. As to quaternary structure, NDH-1 is composed of 14 different subunits. Subunits NuoA, H, J, K, L, M, N constitute the membrane sector of the complex. Requires [4Fe-4S] cluster as cofactor.

The protein resides in the cell inner membrane. It carries out the reaction a quinone + NADH + 5 H(+)(in) = a quinol + NAD(+) + 4 H(+)(out). NDH-1 shuttles electrons from NADH, via FMN and iron-sulfur (Fe-S) centers, to quinones in the respiratory chain. The immediate electron acceptor for the enzyme in this species is believed to be ubiquinone. Couples the redox reaction to proton translocation (for every two electrons transferred, four hydrogen ions are translocated across the cytoplasmic membrane), and thus conserves the redox energy in a proton gradient. This Alkalilimnicola ehrlichii (strain ATCC BAA-1101 / DSM 17681 / MLHE-1) protein is NADH-quinone oxidoreductase subunit I.